A 37-amino-acid chain; its full sequence is Large ribosomal subunit protein bL36c (37 aa).

It belongs to the bacterial ribosomal protein bL36 family.

The protein resides in the plastid. It is found in the chloroplast. The protein is Large ribosomal subunit protein bL36c of Jasminum nudiflorum (Winter jasmine).